A 313-amino-acid chain; its full sequence is MRIREGHLVGDVAGGPIRFRDRVLGYIGLTKPRVIELLLVTTIPAMLLADRGTVDPLLILNTLVGGLLAAAGANTLNCVADADIDKKMKRTERRALARATVPRSHALIFGLALSVLSFFWLWWTTNMLSAHLAGATIAFYVLIYTLVLKRRTSQNVVWGGAAGCMPVMIGWSAVTGTIQWPALVMFLIIFFWTPPHTWALAMRYKEDYEAAGVPMLPVVATERQVTKQILIYTWLTVAATLALALATGWLYAAVAIVAGTWFLAMAHQLYAGVRRGEPVKPLRLFLQSNNYLAVVFCALAVDSALALPTLFSV.

A run of 8 helical transmembrane segments spans residues 34-54 (VIELLLVTTIPAMLLADRGTV), 56-76 (PLLILNTLVGGLLAAAGANTL), 105-125 (HALIFGLALSVLSFFWLWWTT), 128-148 (LSAHLAGATIAFYVLIYTLVL), 152-172 (TSQNVVWGGAAGCMPVMIGWS), 173-193 (AVTGTIQWPALVMFLIIFFWT), 243-263 (LALATGWLYAAVAIVAGTWFL), and 291-311 (YLAVVFCALAVDSALALPTLF).

Belongs to the UbiA prenyltransferase family. Protoheme IX farnesyltransferase subfamily.

The protein localises to the cell membrane. The catalysed reaction is heme b + (2E,6E)-farnesyl diphosphate + H2O = Fe(II)-heme o + diphosphate. It participates in porphyrin-containing compound metabolism; heme O biosynthesis; heme O from protoheme: step 1/1. Its function is as follows. Converts heme B (protoheme IX) to heme O by substitution of the vinyl group on carbon 2 of heme B porphyrin ring with a hydroxyethyl farnesyl side group. The polypeptide is Protoheme IX farnesyltransferase (Mycolicibacterium vanbaalenii (strain DSM 7251 / JCM 13017 / BCRC 16820 / KCTC 9966 / NRRL B-24157 / PYR-1) (Mycobacterium vanbaalenii)).